The chain runs to 279 residues: Vitamin B12-binding protein (279 aa).

The first 20 residues, 1-20 (MTFRFLCWLTGLLLCTAAYA), serve as a signal peptide directing secretion. A Fe/B12 periplasmic-binding domain is found at 24–276 (RVISLAPHAT…QLAELKLAPS (253 aa)). The cysteines at positions 189 and 265 are disulfide-linked.

This sequence belongs to the BtuF family. As to quaternary structure, the complex is composed of two ATP-binding proteins (BtuD), two transmembrane proteins (BtuC) and a solute-binding protein (BtuF).

It is found in the periplasm. Part of the ABC transporter complex BtuCDF involved in vitamin B12 import. Binds vitamin B12 and delivers it to the periplasmic surface of BtuC. This is Vitamin B12-binding protein from Pectobacterium atrosepticum (strain SCRI 1043 / ATCC BAA-672) (Erwinia carotovora subsp. atroseptica).